We begin with the raw amino-acid sequence, 64 residues long: Translation machinery-associated protein 7 (64 aa).

Residues 1-64 (MSGREGGKKK…GSGIKKSGKK (64 aa)) are disordered. Residues 21-50 (DMDDDDVAFKQKQKEDQKAMEALKARASGK) are a coiled coil. Positions 27-44 (VAFKQKQKEDQKAMEALK) are enriched in basic and acidic residues.

The protein belongs to the TMA7 family.

The chain is Translation machinery-associated protein 7 (tma7) from Tetraodon nigroviridis (Spotted green pufferfish).